The primary structure comprises 615 residues: Neurosecretory protein VGF (615 aa).

An N-terminal signal peptide occupies residues 1–22; it reads MKALRLSASALFCLLLINGLGA. 2 disordered regions span residues 22-201 and 218-257; these read AAPP…ESPG and PERA…PKTH. Composition is skewed to pro residues over residues 25 to 35 and 129 to 141; these read PGRPEAQPPPL and PESP…PRPQ. Low complexity predominate over residues 179-194; sequence ETAAAETETRTHTLTR. Position 310 is a pyrrolidone carboxylic acid (Q310). Residues 342–600 form a disordered region; it reads RQRGLGGRGL…EAEERRLQEQ (259 aa). Over residues 378–394 the composition is skewed to acidic residues; the sequence is VGEEDEEAAEAEAEAEE. Basic and acidic residues predominate over residues 415–433; sequence AEDKRSQEETPGHRRKEAE. Phosphoserine; by FAM20C is present on S420. T424 carries the post-translational modification Phosphothreonine; by FAM20C. The span at 434 to 448 shows a compositional bias: acidic residues; it reads GTEEGGEEEDDEEMD. The segment covering 487–497 has biased composition (pro residues); that stretch reads PPEPVPPPRAA. P577 bears the Proline amide mark. Residues 577–599 are compositionally biased toward basic and acidic residues; the sequence is PGREAQARRAQEEAEAEERRLQE.

In terms of assembly, interacts with HSPA8 on cell membrane. Interacts with C3AR1. Interacts with C1QBP. Post-translationally, multiple peptides are derived from VGF, with activities in synaptic plasticity, antidepression, penile erection, autonomic activation, and increases in energy expenditure. In terms of tissue distribution, central and peripheral nervous systems, synthesized exclusively in neuronal and neuroendocrine cells.

The protein resides in the secreted. The protein localises to the cytoplasmic vesicle. Its subcellular location is the secretory vesicle. Functionally, secreted polyprotein that is packaged and proteolytically processed by prohormone convertases PCSK1 and PCSK2 in a cell-type-specific manner. VGF and peptides derived from its processing play many roles in neurogenesis and neuroplasticity associated with learning, memory, depression and chronic pain. Its function is as follows. Plays a role in the control of body fluid homeostasis by regulating vasopressin release. Suppresses presynaptic glutamatergic neurons connected to vasopressin neurons. Plays a role in the control of body fluid homeostasis by regulating vasopressin release. Activates GABAergic interneurons which are inhibitory neurons of the nervous system and thereby suppresses presynaptic glutamatergic neurons. Also stimulates feeding behavior in an orexin-dependent manner in the hypothalamus. Functions as a positive regulator for the activation of orexin neurons resulting in elevated gastric acid secretion and gastric emptying. In terms of biological role, secreted multifunctional neuropeptide that binds to different cell receptors and thereby plays multiple physiological roles including modulation of energy expenditure, pain, response to stress, gastric regulation, glucose homeostasis as well as lipolysis. Activates the G-protein-coupled receptor C3AR1 via a folding-upon-binding mechanism leading to enhanced lipolysis in adipocytes. Interacts with C1QBP receptor in macrophages and microglia causing increased levels of intracellular calcium and hypersensitivity. Functionally, plays a role in the regulation of memory formation and depression-related behaviors potentially by influencing synaptic plasticity and neurogenesis. Induces acute and transient activation of the NTRK2/TRKB receptor and subsequent CREB phosphorylation. Also induces insulin secretion in insulinoma cells by increasing intracellular calcium mobilization. Its function is as follows. Has bactericidal activity against M.luteus, and antifungal activity against P. Pastoris. In Homo sapiens (Human), this protein is Neurosecretory protein VGF (VGF).